The sequence spans 306 residues: Deoxyribokinase (306 aa).

Substrate is bound by residues 10–12 (MVD), 38–42 (GKGAN), and Glu-139. ATP is bound by residues Asn-184 and 220-225 (TMGEKG). 2 residues coordinate K(+): Asp-246 and Ser-248. 251 to 252 (GD) is a binding site for ATP. Residue Asp-252 coordinates substrate. The active-site Proton acceptor is Asp-252. Ser-282, Gly-285, Gly-287, and Ser-291 together coordinate K(+).

This sequence belongs to the carbohydrate kinase PfkB family. Deoxyribokinase subfamily. In terms of assembly, homodimer. It depends on Mg(2+) as a cofactor.

It localises to the cytoplasm. The catalysed reaction is 2-deoxy-D-ribose + ATP = 2-deoxy-D-ribose 5-phosphate + ADP + H(+). Its function is as follows. Catalyzes the ATP-dependent phosphorylation of 2-deoxy-D-ribose to 2-deoxy-D-ribose 5-phosphate (dRib-5P), allowing the use of deoxyribose as the sole carbon source. Can also use D-ribose, with much lower efficiency. The polypeptide is Deoxyribokinase (Salmonella typhi).